Here is a 172-residue protein sequence, read N- to C-terminus: uncharacterized protein (172 aa).

This is an uncharacterized protein from Mycoplasma pneumoniae (strain ATCC 29342 / M129 / Subtype 1) (Mycoplasmoides pneumoniae).